The chain runs to 586 residues: Arginine--tRNA ligase (586 aa).

The 'HIGH' region motif lies at 128 to 138 (ANPTGPLHVGH).

The protein belongs to the class-I aminoacyl-tRNA synthetase family. As to quaternary structure, monomer.

It is found in the cytoplasm. It catalyses the reaction tRNA(Arg) + L-arginine + ATP = L-arginyl-tRNA(Arg) + AMP + diphosphate. The sequence is that of Arginine--tRNA ligase from Coxiella burnetii (strain RSA 331 / Henzerling II).